Reading from the N-terminus, the 1433-residue chain is CAP-Gly domain-containing linker protein 1 (1433 aa).

Positions 1 to 51 (MSMLKPSGLKAPSKTIKHGSTLLKAPASVATAPAEKAPSSEKSSSTTTADA) are disordered. Residues 32 to 49 (APAEKAPSSEKSSSTTTA) show a composition bias toward low complexity. Residues 79-121 (GETQFAPGQWAGIVLDEPIGKNDGSVAGVRYFQCEPLRGIFTR) form the CAP-Gly 1 domain. Positions 133–208 (DEANGTQTAH…VSNLSEAGSL (76 aa)) are disordered. The span at 140-168 (TAHASRATSPTSTSTASAVSASPAALLPS) shows a compositional bias: low complexity. The span at 184–204 (TPSQFSNLSKTASGSVSNLSE) shows a compositional bias: polar residues. Residues 235 to 277 (GETDFAKGEWCGVELDEPLGKNDGAVAGTRYFQCQPRYGLFAP) form the CAP-Gly 2 domain. The span at 319–333 (SLSSVASSVSSKPSR) shows a compositional bias: low complexity. A disordered region spans residues 319–338 (SLSSVASSVSSKPSRTGLLT). Residues 351–1353 (TTALQEALKE…CEAALNGNEE (1003 aa)) are a coiled coil. Residues 1412 to 1429 (PYCDTCEMFGHWTADCND) form a CCHC-type zinc finger.

It is found in the cytoplasm. Its subcellular location is the cytoskeleton. The protein resides in the cytoplasmic vesicle membrane. The protein localises to the cell projection. It localises to the ruffle. In terms of biological role, binds to the plus end of microtubules and regulates the dynamics of the microtubule cytoskeleton. Promotes microtubule growth and microtubule bundling. Links cytoplasmic vesicles to microtubules and thereby plays an important role in intracellular vesicle trafficking. Plays a role macropinocytosis and endosome trafficking. This Gallus gallus (Chicken) protein is CAP-Gly domain-containing linker protein 1 (CLIP1).